A 307-amino-acid chain; its full sequence is 4-hydroxybenzoate octaprenyltransferase (307 aa).

Helical transmembrane passes span 19 to 39 (PVGIELLLWPTLWGVLFAAMG), 48 to 68 (VTAGLPSLSIFVVFALGAILM), 105 to 125 (AIAAFLVLVLLSASLLLFLPI), 127 to 147 (VFYWSFAAVILAFIYPFMKRY), 150 to 170 (LPQVFLAAAFGWAIPMAYVAI), 172 to 192 (GAADIWCWLLFLAYMCWTVAY), 221 to 241 (VIIISLLQILFLVIMGAVMWH), 243 to 263 (FVPTSLGITPVFGLALVAMMF), and 282 to 302 (FLANIWVGRYVFALIAIACVW).

Belongs to the UbiA prenyltransferase family. Mg(2+) is required as a cofactor.

It is found in the cell inner membrane. The catalysed reaction is all-trans-octaprenyl diphosphate + 4-hydroxybenzoate = 4-hydroxy-3-(all-trans-octaprenyl)benzoate + diphosphate. It functions in the pathway cofactor biosynthesis; ubiquinone biosynthesis. Catalyzes the prenylation of para-hydroxybenzoate (PHB) with an all-trans polyprenyl group. Mediates the second step in the final reaction sequence of ubiquinone-8 (UQ-8) biosynthesis, which is the condensation of the polyisoprenoid side chain with PHB, generating the first membrane-bound Q intermediate 3-octaprenyl-4-hydroxybenzoate. The chain is 4-hydroxybenzoate octaprenyltransferase from Psychrobacter arcticus (strain DSM 17307 / VKM B-2377 / 273-4).